Here is a 185-residue protein sequence, read N- to C-terminus: Ribonuclease HII (185 aa).

The 185-residue stretch at 1-185 folds into the RNase H type-2 domain; it reads MKICGIDEAG…LKHLQGILEF (185 aa). A divalent metal cation-binding residues include Asp7, Glu8, and Asp96.

Belongs to the RNase HII family. Mn(2+) serves as cofactor. It depends on Mg(2+) as a cofactor.

It localises to the cytoplasm. It catalyses the reaction Endonucleolytic cleavage to 5'-phosphomonoester.. Endonuclease that specifically degrades the RNA of RNA-DNA hybrids. This is Ribonuclease HII from Campylobacter hominis (strain ATCC BAA-381 / DSM 21671 / CCUG 45161 / LMG 19568 / NCTC 13146 / CH001A).